Reading from the N-terminus, the 503-residue chain is WD repeat-containing protein 55 homolog (503 aa).

2 disordered regions span residues 1-21 (MHTH…DLDD) and 35-132 (ALVG…DDLD). Acidic residues-rich tracts occupy residues 12-21 (DADELDDLDD), 40-50 (DVSDSDIDEHD), and 78-96 (NAED…DEAE). WD repeat units follow at residues 157–196 (KLED…NKLL), 201–242 (VHSK…KLYE), 244–282 (AHDD…PIFE), 285–324 (EVED…LYVQ), 327–366 (PYEE…YHCD), and 411–450 (QHNM…DFGD). The disordered stretch occupies residues 483 to 503 (TKEDEDNADNNDAAAGPSNSA).

The protein belongs to the WD repeat WDR55 family.

The sequence is that of WD repeat-containing protein 55 homolog from Drosophila persimilis (Fruit fly).